We begin with the raw amino-acid sequence, 37 residues long: Potassium channel toxin alpha-KTx 3.13 (37 aa).

Disulfide bonds link Cys7–Cys27, Cys13–Cys32, and Cys17–Cys34. Lys37 bears the Lysine amide mark.

This sequence belongs to the short scorpion toxin superfamily. Potassium channel inhibitor family. Alpha-KTx 03 subfamily. As to expression, expressed by the venom gland.

The protein localises to the secreted. Functionally, blocks voltage-gated potassium channels Kv1.1/KCNA1 (IC(50)=203.15 pM), Kv1.2/KCNA2 (IC(50)=8.92 nM) from rat and human Kv1.3 KCNA3/KCNA3 (IC(50)=171 pM) potently. At 2 uM, also blocks Shaker IR and has a moderate effect on rat Kv1.6/KCNA6. The chain is Potassium channel toxin alpha-KTx 3.13 from Mesobuthus eupeus (Lesser Asian scorpion).